The following is a 236-amino-acid chain: Small ribosomal subunit protein uS3 (236 aa).

The 69-residue stretch at 39-107 (IREFLTEELK…DTSLNIVEVR (69 aa)) folds into the KH type-2 domain. The tract at residues 214–236 (ASERRAVEGDNQGSSSNRRRENA) is disordered.

It belongs to the universal ribosomal protein uS3 family. Part of the 30S ribosomal subunit. Forms a tight complex with proteins S10 and S14.

Functionally, binds the lower part of the 30S subunit head. Binds mRNA in the 70S ribosome, positioning it for translation. This is Small ribosomal subunit protein uS3 from Brucella melitensis biotype 1 (strain ATCC 23456 / CCUG 17765 / NCTC 10094 / 16M).